A 507-amino-acid polypeptide reads, in one-letter code: Cytochrome P450 4X1 (507 aa).

Residues 14 to 34 form a helical membrane-spanning segment; it reads LHLALVFCLALVLMQAMKLYL. A heme-binding site is contributed by Cys-452.

It belongs to the cytochrome P450 family. Heme is required as a cofactor. In terms of tissue distribution, expressed in brain and aorta. In the brain, expressed in the Purkinje cells of the cerebellum, pyramidal neurons in the dentate gyrus of the hippocampus, cortical forebrain neurons and those of brain stem nuclei (at protein level). In addition to neurons, also expressed in cerebral vascular endothelial cells (at protein level). Also expressed in epithelial cells of the choroid plexus (at protein level). Hardly detectable in heart, lung, kidney and spleen.

The protein resides in the endoplasmic reticulum membrane. Its subcellular location is the microsome membrane. It carries out the reaction N-(5Z,8Z,11Z,14Z-eicosatetraenoyl)-ethanolamine + reduced [NADPH--hemoprotein reductase] + O2 = N-(14,15-epoxy-5Z,8Z,11Z-eicosatrienoyl)-ethanolamine + oxidized [NADPH--hemoprotein reductase] + H2O + H(+). Its function is as follows. A cytochrome P450 monooxygenase that selectively catalyzes the epoxidation of the last double bond of the arachidonoyl moiety of anandamide, potentially modulating endocannabinoid signaling. Has no hydroxylase activity toward various fatty acids, steroids and prostaglandins. Mechanistically, uses molecular oxygen inserting one oxygen atom into a substrate, and reducing the second into a water molecule, with two electrons provided by NADPH via cytochrome P450 reductase (CPR; NADPH-ferrihemoprotein reductase). The sequence is that of Cytochrome P450 4X1 from Mus musculus (Mouse).